A 297-amino-acid chain; its full sequence is Phosphatidylserine decarboxylase proenzyme (297 aa).

Catalysis depends on charge relay system; for autoendoproteolytic cleavage activity residues aspartate 92, histidine 149, and serine 254. Serine 254 acts as the Schiff-base intermediate with substrate; via pyruvic acid; for decarboxylase activity in catalysis. Residue serine 254 is modified to Pyruvic acid (Ser); by autocatalysis.

The protein belongs to the phosphatidylserine decarboxylase family. PSD-B subfamily. Prokaryotic type I sub-subfamily. As to quaternary structure, heterodimer of a large membrane-associated beta subunit and a small pyruvoyl-containing alpha subunit. Pyruvate is required as a cofactor. Post-translationally, is synthesized initially as an inactive proenzyme. Formation of the active enzyme involves a self-maturation process in which the active site pyruvoyl group is generated from an internal serine residue via an autocatalytic post-translational modification. Two non-identical subunits are generated from the proenzyme in this reaction, and the pyruvate is formed at the N-terminus of the alpha chain, which is derived from the carboxyl end of the proenzyme. The autoendoproteolytic cleavage occurs by a canonical serine protease mechanism, in which the side chain hydroxyl group of the serine supplies its oxygen atom to form the C-terminus of the beta chain, while the remainder of the serine residue undergoes an oxidative deamination to produce ammonia and the pyruvoyl prosthetic group on the alpha chain. During this reaction, the Ser that is part of the protease active site of the proenzyme becomes the pyruvoyl prosthetic group, which constitutes an essential element of the active site of the mature decarboxylase.

It is found in the cell membrane. The enzyme catalyses a 1,2-diacyl-sn-glycero-3-phospho-L-serine + H(+) = a 1,2-diacyl-sn-glycero-3-phosphoethanolamine + CO2. It participates in phospholipid metabolism; phosphatidylethanolamine biosynthesis; phosphatidylethanolamine from CDP-diacylglycerol: step 2/2. In terms of biological role, catalyzes the formation of phosphatidylethanolamine (PtdEtn) from phosphatidylserine (PtdSer). This chain is Phosphatidylserine decarboxylase proenzyme, found in Bordetella parapertussis (strain 12822 / ATCC BAA-587 / NCTC 13253).